The following is a 482-amino-acid chain: MDEGIPHLQERQLLEHRDFIGLDYSSLYMCKPKRSMKRDDTKDTYKLPHRLIEKKRRDRINECIAQLKDLLPEHLKLTTLGHLEKAVVLELTLKHLKALTALTEQQHQKIIALQNGERSLKSPIQSDLDAFHSGFQTCAKEVLQYLSRFESWTPREPRCVQLINHLHAVATQFLPTPQLLTQQVPLSKGTGAPSAAGSAAAPCLERAGQKLEPLAYCVPVIQRTQPSAELAAENDTDTDSGYGGEAEARPDREKGKGAGASRVTIKQEPPGEDSPAPKRMKLDSRGGGSGGGPGGGAAAAAAALLGPDPAAAAALLRPDAALLSSLVAFGGGGGAPFPQPAAAAAPFCLPFCFLSPSAAAAYVQPFLDKSGLEKYLYPAAAAAPFPLLYPGIPAPAAAAAAAAAAAAAAAAFPCLSSVLSPPPEKAGAAAATLLPHEVAPLGAPHPQHPHGRTHLPFAGPREPGNPESSAQEDPSQPGKEAP.

Residue Lys31 forms a Glycyl lysine isopeptide (Lys-Gly) (interchain with G-Cter in SUMO2) linkage. In terms of domain architecture, bHLH spans 44–99 (TYKLPHRLIEKKRRDRINECIAQLKDLLPEHLKLTTLGHLEKAVVLELTLKHLKAL). Residues 67–71 (LKDLL) are necessary for interaction with RXRA and repressor activity towards RXRA. Residue Lys121 forms a Glycyl lysine isopeptide (Lys-Gly) (interchain with G-Cter in SUMO2) linkage. An Orange domain is found at 131 to 166 (FHSGFQTCAKEVLQYLSRFESWTPREPRCVQLINHL). Lys210 participates in a covalent cross-link: Glycyl lysine isopeptide (Lys-Gly) (interchain with G-Cter in SUMO2). 2 disordered regions span residues 228–298 (AELA…GGAA) and 438–482 (VAPL…KEAP). Residues 246-256 (AEARPDREKGK) are compositionally biased toward basic and acidic residues. Lys266 participates in a covalent cross-link: Glycyl lysine isopeptide (Lys-Gly) (interchain with G-Cter in SUMO2). Positions 285 to 297 (RGGGSGGGPGGGA) are enriched in gly residues.

In terms of assembly, homodimer. Heterodimer with BHLHE40/DEC1. Interacts with CIART and BMAL1. Interacts with RXRA. Interacts with NR0B2 and HNF1A. As to expression, highly expressed in skeletal muscle and brain, moderately expressed in pancreas and heart, weakly expressed in placenta, lung, liver and kidney.

Its subcellular location is the nucleus. Functionally, transcriptional repressor involved in the regulation of the circadian rhythm by negatively regulating the activity of the clock genes and clock-controlled genes. Acts as the negative limb of a novel autoregulatory feedback loop (DEC loop) which differs from the one formed by the PER and CRY transcriptional repressors (PER/CRY loop). Both these loops are interlocked as it represses the expression of PER1 and in turn is repressed by PER1/2 and CRY1/2. Represses the activity of the circadian transcriptional activator: CLOCK-BMAL1 heterodimer by competing for the binding to E-box elements (5'-CACGTG-3') found within the promoters of its target genes. Negatively regulates its own expression and the expression of DBP and BHLHE41/DEC2. Acts as a corepressor of RXR and the RXR-LXR heterodimers and represses the ligand-induced RXRA/B/G, NR1H3/LXRA, NR1H4 and VDR transactivation activity. Inhibits HNF1A-mediated transactivation of CYP1A2, CYP2E1 AND CYP3A11. The protein is Class E basic helix-loop-helix protein 41 of Homo sapiens (Human).